The following is a 216-amino-acid chain: Large ribosomal subunit protein uL24m (216 aa).

A mitochondrion-targeting transit peptide spans 1–9; sequence MRLTALLSM. In terms of domain architecture, KOW spans 56-89; sequence VVRGDTVEVLSGKEKGKQGKVAQVIRARNWVILE. A disordered region spans residues 167 to 186; sequence PQQWKDGPKDTSPEDTLQKT.

The protein belongs to the universal ribosomal protein uL24 family. Component of the mitochondrial ribosome large subunit (39S) which comprises a 16S rRNA and about 50 distinct proteins.

The protein localises to the mitochondrion. The protein is Large ribosomal subunit protein uL24m (mrpl24) of Danio rerio (Zebrafish).